Reading from the N-terminus, the 122-residue chain is MWLLDQWAERHIAEAQAKGEFDNLAGSGEPLILDDDSHVPPELRAGYRLLKNAGCLPPELEQRREAIQLLDILKGIRHDDPQYQEVSRRLSLLELKLRQAGLSTDFLRGDYADKLLDKINDN.

This is an uncharacterized protein from Escherichia coli (strain K12).